The chain runs to 937 residues: ABC transporter A family member 4 (937 aa).

The next 7 helical transmembrane spans lie at 34-54, 340-360, 394-414, 423-443, 455-475, 478-498, and 528-548; these read LIVI…LFDT, IASV…FPVI, FLAI…AIGL, SIQF…AFLV, VAAY…FQFM, GLSF…FSLY, and AMDE…IAAY. The ABC transporter domain maps to 618–852; sequence DKLKKVYPGR…YGGSYVLTMT (235 aa). 653-660 lines the ATP pocket; sequence GPNGAGKT.

This sequence belongs to the ABC transporter superfamily. ABCA family. CPR flippase (TC 3.A.1.211) subfamily.

It localises to the membrane. This is ABC transporter A family member 4 (ABCA4) from Arabidopsis thaliana (Mouse-ear cress).